Reading from the N-terminus, the 3010-residue chain is Genome polyprotein (3010 aa).

The residue at position 2 (Ser2) is an N-acetylserine; by host. An interaction with STAT1 region spans residues 2–23 (STNPKPQRKTKRNTNRRPQDVK). The segment at 2-58 (STNPKPQRKTKRNTNRRPQDVKFPGGGQIVGGVYLLPRRGPRLGVRAPRKTSERSQP) is interaction with EIF2AK2/PKR. Residues 2–59 (STNPKPQRKTKRNTNRRPQDVKFPGGGQIVGGVYLLPRRGPRLGVRAPRKTSERSQPR) form an interaction with DDX3X region. The interval 2-75 (STNPKPQRKT…PKARRPEGRT (74 aa)) is disordered. 2 short sequence motifs (nuclear localization signal) span residues 5 to 13 (PKPQRKTKR) and 38 to 43 (PRRGPR). Positions 7–16 (PQRKTKRNTN) are enriched in basic residues. Positions 32–47 (GGVYLLPRRGPRLGVR) are enriched in low complexity. Position 53 is a phosphoserine; by host (Ser53). 2 consecutive short sequence motifs (nuclear localization signal) follow at residues 58-64 (PRGRRQP) and 66-71 (PKARRP). Residues 58–68 (PRGRRQPIPKA) are compositionally biased toward basic residues. Ser99 bears the Phosphoserine; by host mark. The tract at residues 112–152 (PRRRSRNLGKVIDTLTCGFADLMGYIPLVGAPLGGAARALA) is important for endoplasmic reticulum and mitochondrial localization. Residue Ser116 is modified to Phosphoserine; by host PKA. Residues 122 to 173 (VIDTLTCGFADLMGYIPLVGAPLGGAARALAHGVRVLEDGVNYATGNLPGCS) are interaction with APOA2. The tract at residues 164 to 167 (YATG) is important for lipid droplets localization. The propeptide at 178 to 191 (LLALLSCLTTPASA) is ER anchor for the core protein, removed in mature form by host signal peptidase. Residues 190–358 (SAYEVHNVSG…AGAHWGVLAG (169 aa)) are Lumenal-facing. Residues Asn196, Asn209, Asn234, and Asn250 are each glycosylated (N-linked (GlcNAc...) asparagine; by host). An important for fusion region spans residues 265–296 (LVGAAAFCSAMYVGDLCGSVFLVSQLFTFSPR). Residue Asn305 is glycosylated (N-linked (GlcNAc...) asparagine; by host). The helical transmembrane segment at 359-379 (LAYYSMAGNWAKVLIVMLLFA) threads the bilayer. Over 380–725 (GVDGDTHVTG…WEYVLLLFLL (346 aa)) the chain is Lumenal. The HVR1 stretch occupies residues 385-411 (THVTGGAQAKTTNRLVSMFASGPSQKI). N-linked (GlcNAc...) asparagine; by host glycosylation occurs at Asn417. N-linked (GlcNAc...) (high mannose) asparagine; by host glycans are attached at residues Asn423, Asn430, and Asn448. Disulfide bonds link Cys429-Cys552, Cys452-Cys459, Cys486-Cys494, and Cys503-Cys508. Residues 474–482 (YAESSRSDQ) are HVR2. The interval 480–494 (SDQRPYCWHYPPPQC) is CD81-binding 1. 2 N-linked (GlcNAc...) (high mannose) asparagine; by host glycosylation sites follow: Asn532 and Asn540. The segment at 544–552 (PPQGNWFGC) is CD81-binding 2. Residue Asn556 is glycosylated (N-linked (GlcNAc...) (high mannose) asparagine; by host). The cysteines at positions 564 and 569 are disulfide-linked. An N-linked (GlcNAc...) (high mannose) asparagine; by host glycan is attached at Asn576. 3 disulfides stabilise this stretch: Cys581/Cys585, Cys597/Cys620, and Cys607/Cys644. N-linked (GlcNAc...) (high mannose) asparagine; by host glycans are attached at residues Asn623 and Asn645. An intrachain disulfide couples Cys652 to Cys677. The segment at 660–671 (PELSPLLLSTTE) is EIF2AK2/eIF2-alpha phosphorylation homology domain (PePHD). A helical transmembrane segment spans residues 726–746 (LADARVCACLWMMLLIAQAEA). Residues 747-757 (ALENLVVLNSA) are Lumenal-facing. The chain crosses the membrane as a helical span at residues 758-778 (SVAGAHGILSFLVFFCAAWYI). At 779-781 (KGR) the chain is on the cytoplasmic side. A helical membrane pass occupies residues 782-803 (LVPGATYALYGVWPLLLLLLAL). The Lumenal segment spans residues 804-813 (PPRAYAMDRE). A helical transmembrane segment spans residues 814-834 (MAASCGGAVFVGLVLLTLSPY). The Cytoplasmic portion of the chain corresponds to 835-838 (YKVF). The chain crosses the membrane as a helical span at residues 839–859 (LARLIWWLQYFTTRAEADLHV). Topologically, residues 860–881 (WIPPLNARGGRDAIILLMCAVH) are lumenal. A helical transmembrane segment spans residues 882-902 (PELIFDITKLLIAILGPLMVL). The Peptidase C18 domain maps to 903 to 1026 (QAGITRVPYF…SLEGRGLRLL (124 aa)). Over 903 to 1657 (QAGITRVPYF…CMSADLEVVT (755 aa)) the chain is Cytoplasmic. The segment at 904-1206 (AGITRVPYFV…PVESMETTMR (303 aa)) is protease NS2-3. Residue Cys922 is the site of S-palmitoyl cysteine; by host attachment. The tract at residues 929–949 (AGGHYVQMAFMKLGALTGTYI) is interaction with host SCPS1. Catalysis depends on for protease NS2 activity; shared with dimeric partner residues His952, Glu972, and Cys993. In terms of domain architecture, Peptidase S29 spans 1027–1208 (APITAYSQQT…ESMETTMRSP (182 aa)). Catalysis depends on charge relay system; for serine protease NS3 activity residues His1083 and Asp1107. Residues Cys1123 and Cys1125 each coordinate Zn(2+). The Charge relay system; for serine protease NS3 activity role is filled by Ser1165. Zn(2+) is bound by residues Cys1171 and His1175. The Helicase ATP-binding domain maps to 1217 to 1369 (PAVPQSFQVA…PNIEEVALSN (153 aa)). 1230–1237 (APTGSGKS) is an ATP binding site. The Mg(2+) site is built by Ser1237 and Glu1317. Positions 1316–1319 (DECH) match the DECH box motif. The tract at residues 1486–1497 (QRRGRTGRGRRG) is RNA-binding. A helical transmembrane segment spans residues 1658–1678 (STWVLVGGVLAALAAYCLTTG). The NS3-binding stretch occupies residues 1679–1690 (SVVIVGRIILSG). At 1679–1805 (SVVIVGRIIL…SITSPLTTQS (127 aa)) the chain is on the cytoplasmic side. A helical membrane pass occupies residues 1806–1826 (TLLFNILGGWVAAQLAPPSAA). Topologically, residues 1827–1828 (SA) are lumenal. Residues 1829–1849 (FVGAGIAGAAVGSIGLGKVLV) form a helical membrane-spanning segment. Residues 1833-1861 (GIAGAAVGSIGLGKVLVDILAGYGAGVAG) are glycine zipper. Position 1850 (Asp1850) is a topological domain, cytoplasmic. A helical membrane pass occupies residues 1851–1871 (ILAGYGAGVAGALVAFKVMSG). The Lumenal portion of the chain corresponds to 1872 to 1881 (EMPSTEDLVN). Residues 1882 to 1902 (LLPAILSPGALVVGVVCAAIL) traverse the membrane as a helical segment. The Cytoplasmic segment spans residues 1903 to 1972 (RRHVGPGEGA…WINEDCSTPC (70 aa)). 2 S-palmitoyl cysteine; by host lipidation sites follow: Cys1968 and Cys1972. The stretch at 1973-2003 (SGSWLRDVWDWICTVLTDFKTWLQSKLLPQL) is an intramembrane region. The interval 1978–1998 (RDVWDWICTVLTDFKTWLQSK) is membrane-binding. Over 2004-2989 (PGVPFFSCQR…YHSLSRARPR (986 aa)) the chain is Cytoplasmic. The RNA-binding stretch occupies residues 2005-2221 (GVPFFSCQRG…KATCTTHHVS (217 aa)). Zn(2+) contacts are provided by Cys2011, Cys2029, Cys2031, and Cys2052. Residues 2120-2208 (EFFSEVDGVR…ASSSASQLSA (89 aa)) are FKBP8-binding. Residues 2120–2332 (EFFSEVDGVR…PIPPPRRKRT (213 aa)) form a transcriptional activation region. The interval 2135–2139 (PACRP) is interaction with non-structural protein 4A. Residues 2189–2441 (RLARGSPPSL…PCAAEESKLP (253 aa)) form an interaction with host SKP2 region. Residue Ser2194 is modified to Phosphoserine; by host; in p56. Ser2197, Ser2201, Ser2204, Ser2207, and Ser2210 each carry phosphoserine; by host; in p58. The tract at residues 2210-2249 (SLKATCTTHHVSPDADLIEANLLWRQEMGGNITRVESENK) is ISDR. Residues 2210-2275 (SLKATCTTHH…REVSVPAEIL (66 aa)) are EIF2AK2/PKR-binding. Residues 2249 to 2306 (KVVVLDSFDPLRAEEDEREVSVPAEILRKSKKFPAAMPIWARPDYNPPLLESWKDPDY) form an NS4B-binding region. The SH3-binding signature appears at 2322 to 2325 (PPIP). Residues 2326 to 2334 (PPRRKRTVV) carry the Nuclear localization signal motif. Residues 2332–2441 (TVVLTESSVS…PCAAEESKLP (110 aa)) are interaction with host IFI27. Residue Lys2350 forms a Glycyl lysine isopeptide (Lys-Gly) (interchain with G-Cter in ubiquitin) linkage. Residues 2351–2365 (TFGSSESSAVDSGTA) show a composition bias toward polar residues. The segment at 2351–2407 (TFGSSESSAVDSGTATALPDQASDDGDKGSDVESYSSMPPLEGEPGDPDLSDGSWST) is disordered. The V3 stretch occupies residues 2354-2377 (SSESSAVDSGTATALPDQASDDGD). Phosphoserine; by host is present on residues Ser2448 and Ser2461. The RdRp catalytic domain occupies 2633–2751 (PMGFSYDTRC…ICESAGTQED (119 aa)). Mg(2+) contacts are provided by Asp2639, Asp2737, and Asp2738. A helical membrane pass occupies residues 2990 to 3010 (WFMLCLLLLSVGVGIYLLPNR).

Belongs to the hepacivirus polyprotein family. As to quaternary structure, homooligomer. Interacts with E1 (via C-terminus). Interacts with the non-structural protein 5A. Interacts (via N-terminus) with host STAT1 (via SH2 domain); this interaction results in decreased STAT1 phosphorylation and ubiquitin-mediated proteasome-dependent STAT1 degradation, leading to decreased IFN-stimulated gene transcription. Interacts with host STAT3; this interaction constitutively activates STAT3. Associates with host LTBR receptor. Interacts with host TNFRSF1A receptor and possibly induces apoptosis. Interacts with host HNRPK. Interacts with host YWHAE. Interacts with host UBE3A/E6AP. Interacts with host DDX3X. Interacts with host APOA2. Interacts with host RXRA protein. Interacts with host SP110 isoform 3/Sp110b; this interaction sequesters the transcriptional corepressor SP110 away from the nucleus. Interacts with host CREB3 nuclear transcription protein; this interaction triggers cell transformation. Interacts with host ACY3. Interacts with host C1QR1. Interacts with host RBM24; this interaction, which enhances the interaction of the mature core protein with 5'-UTR, may inhibit viral translation and favor replication. Interacts (via N-terminus) with host EIF2AK2/PKR (via N-terminus); this interaction induces the autophosphorylation of EIF2AK2. Part of the viral assembly initiation complex composed of NS2, E1, E2, NS3, NS4A, NS5A and the mature core protein. In terms of assembly, forms a heterodimer with envelope glycoprotein E2. Interacts with mature core protein. Interacts with protease NS2. The heterodimer E1/E2 interacts with host CLDN1; this interaction plays a role in viral entry into host cell. Interacts with host SPSB2 (via C-terminus). Part of the viral assembly initiation complex composed of NS2, E1, E2, NS3, NS4A, NS5A and the mature core protein. Interacts with host NEURL3; this interaction prevents E1 binding to glycoprotein E2. Forms a heterodimer with envelope glycoprotein E1. Interacts with host CD81 and SCARB1 receptors; these interactions play a role in viral entry into host cell. Interacts with host EIF2AK2/PKR; this interaction inhibits EIF2AK2 and probably allows the virus to evade the innate immune response. Interacts with host CD209/DC-SIGN and CLEC4M/DC-SIGNR. Interact with host SPCS1; this interaction is essential for viral particle assembly. Interacts with protease NS2. The heterodimer E1/E2 interacts with host CLDN1; this interaction plays a role in viral entry into host cell. Part of the viral assembly initiation complex composed of NS2, E1, E2, NS3, NS4A, NS5A and the mature core protein. Interacts with host SLC3A2/4F2hc; the interaction may facilitate viral entry into host cell. Interacts with human PLSCR1. As to quaternary structure, homohexamer. Homoheptamer. Interacts with protease NS2. In terms of assembly, homodimer. Interacts with host SPCS1; this interaction is essential for viral particle assembly. Interacts with envelope glycoprotein E1. Interacts with envelope glycoprotein E2. Interacts with viroporin p7. Interacts with serine protease/helicase NS3. Part of the replication complex composed of NS2, NS3, NS4A, NS4B, NS5A and the RNA-directed RNA polymerase embedded in an ER-derived membranous web. Part of the viral assembly initiation complex composed of NS2, E1, E2, NS3, NS4A, NS5A and the mature core protein. Interacts with protease NS2. Interacts with non-structural protein 4A; this interaction stabilizes the folding of NS3 serine protease. NS3-NS4A interaction is essential for NS3 activation and allows membrane anchorage of the latter. NS3/NS4A complex also prevents phosphorylation of host IRF3, thus preventing the establishment of dsRNA induced antiviral state. Interacts with host MAVS; this interaction leads to the cleavage and inhibition of host MAVS. Interacts with host TICAM1; this interaction leads to the cleavage and inhibition of host TICAM1. Interacts with host TANK-binding kinase/TBK1; this interaction results in the inhibition of the association between TBK1 and IRF3, which leads to the inhibition of IRF3 activation. Interacts with host RBM24. Part of the replication complex composed of NS2, NS3, NS4A, NS4B, NS5A and the RNA-directed RNA polymerase embedded in an ER-derived membranous web. Part of the viral assembly initiation complex composed of NS2, E1, E2, NS3, NS4A, NS5A and the mature core protein. As to quaternary structure, interacts with NS3 serine protease; this interaction stabilizes the folding of NS3 serine protease. NS3-NS4A interaction is essential for NS3 activation and allows membrane anchorage of the latter. Interacts with non-structural protein 5A (via N-terminus). Part of the replication complex composed of NS2, NS3, NS4A, NS4B, NS5A and the RNA-directed RNA polymerase embedded in an ER-derived membranous web. Part of the viral assembly initiation complex composed of NS2, E1, E2, NS3, NS4A, NS5A and the mature core protein. In terms of assembly, monomer. Homodimer; dimerization is required for RNA-binding. Interacts with the mature core protein. Interacts (via N-terminus) with non-structural protein 4A. Interacts with non-structural protein 4B. Interacts with RNA-directed RNA polymerase. Part of the viral assembly initiation complex composed of NS2, E1, E2, NS3, NS4A, NS5A and the mature core protein. Part of the replication complex composed of NS2, NS3, NS4A, NS4B, NS5A and the RNA-directed RNA polymerase embedded in an ER-derived membranous web. Interacts with host GRB2. Interacts with host BIN1. Interacts with host PIK3R1. Interacts with host SRCAP. Interacts with host FKBP8. Interacts with host VAPB. Interacts with host EIF2AK2/PKR; this interaction leads to disruption of EIF2AK2 dimerization by NS5A and probably allows the virus to evade the innate immune response. Interacts (via N-terminus) with host PACSIN2 (via N-terminus); this interaction attenuates protein kinase C alpha-mediated phosphorylation of PACSIN2 by disrupting the interaction between PACSIN2 and PRKCA. Interacts (via N-terminus) with host SRC kinase (via SH2 domain). Interacts with most Src-family kinases. Interacts with host IFI27 and SKP2; promotes the ubiquitin-mediated proteasomal degradation of NS5A. Interacts with host GPS2. Interacts with host TNFRSF21; this interaction allows the modulation by the virus of JNK, p38 MAPK, STAT3, and Akt signaling pathways in a DR6-dependent manner. Interacts (via N-terminus) with host CIDEB (via N-terminus); this interaction seems to regulate the association of HCV particles with APOE. Interacts with host CHKA/Choline Kinase-alpha; CHKA bridges host PI4KA and NS5A and potentiates NS5A-stimulated PI4KA activity, which then facilitates the targeting of the ternary complex to the ER for viral replication. Interacts with host SPSB2 (via C-terminus); this interaction targets NS5A for ubiquitination and degradation. Interacts with host RAB18; this interaction may promote the association of NS5A and other replicase components with lipid droplets. Interacts (via region D2) with host PPIA/CYPA; the interaction stimulates RNA-binding ability of NS5A and is dependent on the peptidyl-prolyl cis-trans isomerase activity of PPIA/CYPA. Interacts with host TRIM14; this interaction induces the degradation of NS5A. Homooligomer. Interacts with non-structural protein 5A. Interacts with host VAPB. Interacts with host PRK2/PKN2. Interacts with host HNRNPA1 and SEPT6; these interactions facilitate the viral replication. Part of the replication complex composed of NS2, NS3, NS4A, NS4B, NS5A and the RNA-directed RNA polymerase embedded in an ER-derived membranous web. The cofactor is Zn(2+). Mg(2+) is required as a cofactor. In terms of processing, specific enzymatic cleavages in vivo yield mature proteins. The structural proteins, core, E1, E2 and p7 are produced by proteolytic processing by host signal peptidases. The core protein precursor is synthesized as a 23 kDa, which is retained in the ER membrane through the hydrophobic signal peptide. Cleavage by the signal peptidase releases the 21 kDa mature core protein. The cleavage of the core protein precursor occurs between aminoacids 176 and 188 but the exact cleavage site is not known. Some degraded forms of the core protein appear as well during the course of infection. The other proteins (p7, NS2, NS3, NS4A, NS4B, NS5A and NS5B) are cleaved by the viral proteases. Autoprocessing between NS2 and NS3 is mediated by the NS2 cysteine protease catalytic domain and regulated by the NS3 N-terminal domain. Phosphorylated by host PKC and PKA. Post-translationally, ubiquitinated; mediated by UBE3A and leading to core protein subsequent proteasomal degradation. In terms of processing, highly N-glycosylated. Palmitoylation is required for NS2/3 autoprocessing and E2 recruitment to membranes. Post-translationally, palmitoylated. This modification may play a role in its polymerization or in protein-protein interactions. In terms of processing, phosphorylated on serines in a basal form termed p56. p58 is a hyperphosphorylated form of p56. p56 and p58 coexist in the cell in roughly equivalent amounts. Hyperphosphorylation is dependent on the presence of NS4A. Host CSNK1A1/CKI-alpha or RPS6KB1 kinases may be responsible for NS5A phosphorylation. Tyrosine phosphorylation is essential for the interaction with host SRC. Post-translationally, the N-terminus is phosphorylated by host PRK2/PKN2.

It localises to the host endoplasmic reticulum membrane. The protein resides in the host mitochondrion membrane. The protein localises to the virion. It is found in the host cytoplasm. Its subcellular location is the host nucleus. It localises to the host lipid droplet. The protein resides in the virion membrane. The protein localises to the host mitochondrion. It is found in the host cell membrane. Its subcellular location is the host perinuclear region. The catalysed reaction is Hydrolysis of four peptide bonds in the viral precursor polyprotein, commonly with Asp or Glu in the P6 position, Cys or Thr in P1 and Ser or Ala in P1'.. It carries out the reaction a ribonucleoside 5'-triphosphate + H2O = a ribonucleoside 5'-diphosphate + phosphate + H(+). The enzyme catalyses ATP + H2O = ADP + phosphate + H(+). It catalyses the reaction RNA(n) + a ribonucleoside 5'-triphosphate = RNA(n+1) + diphosphate. With respect to regulation, inhibited by the antiviral drug hexamethylene amiloride. Inhibition by amantadine appears to be genotype-dependent. Also inhibited by long-alkyl-chain iminosugar derivatives. Activity is up-regulated by PRK2/PKN2-mediated phosphorylation. Its activity is regulated as follows. Activity of auto-protease NS2 is dependent on zinc ions and completely inhibited by EDTA, 1,10-phenanthroline, iodocetamide and N-ethylmaleimide. According to PubMed:9261354, completely inhibited by the serine protease inhibitors TLCK and TPCK. According to PubMed:8189501, almost completely inhibited by TPCK and slightly inhibited by TLCK. Not inhibited by antipain, aprotinin, E64, PMSF and pepstatin. Also inhibited by NS2 and NS4A derived peptides. Serine protease/helicase NS3 is also activated by zinc ions. Its function is as follows. Packages viral RNA to form a viral nucleocapsid, and promotes virion budding. Participates in the viral particle production as a result of its interaction with the non-structural protein 5A. Binds RNA and may function as a RNA chaperone to induce the RNA structural rearrangements taking place during virus replication. Modulates viral translation initiation by interacting with viral IRES and 40S ribosomal subunit. Affects various cell signaling pathways, host immunity and lipid metabolism. Prevents the establishment of cellular antiviral state by blocking the interferon-alpha/beta (IFN-alpha/beta) and IFN-gamma signaling pathways and by blocking the formation of phosphorylated STAT1 and promoting ubiquitin-mediated proteasome-dependent degradation of STAT1. Activates STAT3 leading to cellular transformation. Regulates the activity of cellular genes, including c-myc and c-fos. May repress the promoter of p53, and sequester CREB3 and SP110 isoform 3/Sp110b in the cytoplasm. Represses cell cycle negative regulating factor CDKN1A, thereby interrupting an important check point of normal cell cycle regulation. Targets transcription factors involved in the regulation of inflammatory responses and in the immune response: suppresses NF-kappa-B activation, and activates AP-1. Binds to dendritic cells (DCs) via C1QR1, resulting in down-regulation of T-lymphocytes proliferation. Alters lipid metabolism by interacting with hepatocellular proteins involved in lipid accumulation and storage. Induces up-regulation of FAS promoter activity, and thereby contributes to the increased triglyceride accumulation in hepatocytes (steatosis). In terms of biological role, forms a heterodimer with envelope glycoprotein E2, which mediates virus attachment to the host cell, virion internalization through clathrin-dependent endocytosis and fusion with host membrane. Fusion with the host cell is most likely mediated by both E1 and E2, through conformational rearrangements of the heterodimer required for fusion rather than a classical class II fusion mechanism. E1/E2 heterodimer binds host apolipoproteins such as APOB and APOE thereby forming a lipo-viro-particle (LVP). APOE associated to the LVP allows the initial virus attachment to cell surface receptors such as the heparan sulfate proteoglycans (HSPGs), syndecan-1 (SDC1), syndecan-1 (SDC2), the low-density lipoprotein receptor (LDLR) and scavenger receptor class B type I (SCARB1). The cholesterol transfer activity of SCARB1 allows E2 exposure and binding of E2 to SCARB1 and the tetraspanin CD81. E1/E2 heterodimer binding on CD81 activates the epithelial growth factor receptor (EGFR) signaling pathway. Diffusion of the complex E1-E2-EGFR-SCARB1-CD81 to the cell lateral membrane allows further interaction with Claudin 1 (CLDN1) and occludin (OCLN) to finally trigger HCV entry. Functionally, forms a heterodimer with envelope glycoprotein E1, which mediates virus attachment to the host cell, virion internalization through clathrin-dependent endocytosis and fusion with host membrane. Fusion with the host cell is most likely mediated by both E1 and E2, through conformational rearrangements of the heterodimer required for fusion rather than a classical class II fusion mechanism. The interaction between envelope glycoprotein E2 and host apolipoprotein E/APOE allows the proper assembly, maturation and infectivity of the viral particles. This interaction is probably promoted via the up-regulation of cellular autophagy by the virus. E1/E2 heterodimer binds host apolipoproteins such as APOB and APOE thereby forming a lipo-viro-particle (LVP). APOE associated to the LVP allows the initial virus attachment to cell surface receptors such as the heparan sulfate proteoglycans (HSPGs), syndecan-1 (SDC1), syndecan-1 (SDC2), the low-density lipoprotein receptor (LDLR) and scavenger receptor class B type I (SCARB1). The cholesterol transfer activity of SCARB1 allows E2 exposure and binding of E2 to SCARB1 and the tetraspanin CD81. E1/E2 heterodimer binding on CD81 activates the epithelial growth factor receptor (EGFR) signaling pathway. Diffusion of the complex E1-E2-EGFR-SCARB1-CD81 to the cell lateral membrane allows further interaction with Claudin 1 (CLDN1) and occludin (OCLN) to finally trigger HCV entry. Inhibits host EIF2AK2/PKR activation, preventing the establishment of an antiviral state. Viral ligand for CD209/DC-SIGN and CLEC4M/DC-SIGNR, which are respectively found on dendritic cells (DCs), and on liver sinusoidal endothelial cells and macrophage-like cells of lymph node sinuses. These interactions allow the capture of circulating HCV particles by these cells and subsequent facilitated transmission to permissive cells such as hepatocytes and lymphocyte subpopulations. The interaction between E2 and host amino acid transporter complex formed by SLC3A2 and SLC7A5/LAT1 may facilitate viral entry into host cell. Ion channel protein that acts as a viroporin and plays an essential role in the assembly, envelopment and secretion of viral particles. Regulates the host cell secretory pathway, which induces the intracellular retention of viral glycoproteins and favors assembly of viral particles. Creates a pore in acidic organelles and releases Ca(2+) and H(+) in the cytoplasm of infected cells, leading to a productive viral infection. High levels of cytoplasmic Ca(2+) may trigger membrane trafficking and transport of viral ER-associated proteins to viroplasms, sites of viral genome replication. This ionic imbalance induces the assembly of the inflammasome complex, which triggers the maturation of pro-IL-1beta into IL-1beta through the action of caspase-1. Targets also host mitochondria and induces mitochondrial depolarization. In addition of its role as a viroporin, acts as a lipid raft adhesion factor. Its function is as follows. Cysteine protease required for the proteolytic auto-cleavage between the non-structural proteins NS2 and NS3. The N-terminus of NS3 is required for the function of NS2 protease (active region NS2-3). Promotes the initiation of viral particle assembly by mediating the interaction between structural and non-structural proteins. In terms of biological role, displays three enzymatic activities: serine protease with a chymotrypsin-like fold, NTPase and RNA helicase. NS3 serine protease, in association with NS4A, is responsible for the cleavages of NS3-NS4A, NS4A-NS4B, NS4B-NS5A and NS5A-NS5B. The NS3/NS4A complex prevents phosphorylation of host IRF3, thus preventing the establishment of dsRNA induced antiviral state. The NS3/NS4A complex induces host amino acid transporter component SLC3A2, thus contributing to HCV propagation. NS3 RNA helicase binds to RNA and unwinds both dsDNA and dsRNA in the 3' to 5' direction, and likely resolves RNA complicated stable secondary structures in the template strand. Binds a single ATP and catalyzes the unzipping of a single base pair of dsRNA. Inhibits host antiviral proteins TBK1 and IRF3 thereby preventing the establishment of an antiviral state. Cleaves host MAVS/CARDIF thereby preventing the establishment of an antiviral state. Cleaves host TICAM1/TRIF, thereby disrupting TLR3 signaling and preventing the establishment of an antiviral state. Functionally, peptide cofactor which forms a non-covalent complex with the N-terminal of NS3 serine protease. The NS3/NS4A complex prevents phosphorylation of host IRF3, thus preventing the establishment of dsRNA induced antiviral state. The NS3/NS4A complex induces host amino acid transporter component SLC3A2, thus contributing to HCV propagation. Induces a specific membrane alteration that serves as a scaffold for the virus replication complex. This membrane alteration gives rise to the so-called ER-derived membranous web that contains the replication complex. NS4B self-interaction contributes to its function in membranous web formation. Promotes host TRIF protein degradation in a CASP8-dependent manner thereby inhibiting host TLR3-mediated interferon signaling. Disrupts the interaction between STING and TBK1 contributing to the inhibition of interferon signaling. Its function is as follows. Phosphorylated protein that is indispensable for viral replication and assembly. Both hypo- and hyperphosphorylated states are required for the viral life cycle. The hyperphosphorylated form of NS5A is an inhibitor of viral replication. Involved in RNA-binding and especially in binding to the viral genome. Zinc is essential for RNA-binding. Participates in the viral particle production as a result of its interaction with the viral mature core protein. Its interaction with host VAPB may target the viral replication complex to vesicles. Down-regulates viral IRES translation initiation. Mediates interferon resistance, presumably by interacting with and inhibiting host EIF2AK2/PKR. Prevents BIN1-induced apoptosis. Acts as a transcriptional activator of some host genes important for viral replication when localized in the nucleus. Via the interaction with host PACSIN2, modulates lipid droplet formation in order to promote virion assembly. Modulates TNFRSF21/DR6 signaling pathway for viral propagation. In terms of biological role, RNA-dependent RNA polymerase that performs primer-template recognition and RNA synthesis during viral replication. Initiates RNA transcription/replication at a flavin adenine dinucleotide (FAD), resulting in a 5'- FAD cap on viral RNAs. In this way, recognition of viral 5' RNA by host pattern recognition receptors can be bypassed, thereby evading activation of antiviral pathways. In Hepatitis C virus genotype 1b (isolate BK) (HCV), this protein is Genome polyprotein.